The chain runs to 280 residues: Phosphatidylglycerol--prolipoprotein diacylglyceryl transferase (280 aa).

3 helical membrane passes run 19–39 (LSVR…YFVA), 56–76 (IIFY…VIFQ), and 90–110 (IWHG…AGVI). Arginine 138 lines the a 1,2-diacyl-sn-glycero-3-phospho-(1'-sn-glycerol) pocket. The next 2 helical transmembrane spans lie at 204–224 (LGET…FIEG) and 236–256 (IRVA…LIVY).

Belongs to the Lgt family.

It is found in the cell membrane. The enzyme catalyses L-cysteinyl-[prolipoprotein] + a 1,2-diacyl-sn-glycero-3-phospho-(1'-sn-glycerol) = an S-1,2-diacyl-sn-glyceryl-L-cysteinyl-[prolipoprotein] + sn-glycerol 1-phosphate + H(+). It participates in protein modification; lipoprotein biosynthesis (diacylglyceryl transfer). Functionally, catalyzes the transfer of the diacylglyceryl group from phosphatidylglycerol to the sulfhydryl group of the N-terminal cysteine of a prolipoprotein, the first step in the formation of mature lipoproteins. This Staphylococcus aureus (strain MRSA252) protein is Phosphatidylglycerol--prolipoprotein diacylglyceryl transferase.